Consider the following 199-residue polypeptide: Golgi to ER traffic protein 1 (199 aa).

Residues 1–11 lie on the Lumenal side of the membrane; it reads MLLPDLHPYTI. A helical transmembrane segment spans residues 12–31; that stretch reads LLSIFLVLVVKQLVATIGKS. The Cytoplasmic portion of the chain corresponds to 32–115; the sequence is TIQEFVWLVY…SIDKASNALI (84 aa). The stretch at 76–116 forms a coiled coil; it reads YAKWTKLNRQADKLSAELQKLNQEIQQQKSSIDKASNALIL. Residues 116–136 traverse the membrane as a helical segment; the sequence is LVLTTLPIWIARVFYRKTHLF. The Lumenal segment spans residues 137–160; that stretch reads YIRQGIFPKYVEWVLALPFLPNGA. A helical membrane pass occupies residues 161 to 177; the sequence is VGLTIWMFAVNSVVSNF. Residues 178-199 are Cytoplasmic-facing; the sequence is SFLVSFPFAKRVSKPVRDTKVE.

It belongs to the WRB/GET1 family. In terms of assembly, component of the Golgi to ER traffic (GET) complex, which is composed of GET1, GET2 and GET3. Within the complex, GET1 and GET2 form a heterotetramer which is stabilized by phosphatidylinositol binding and which binds to the GET3 homodimer.

It localises to the endoplasmic reticulum membrane. The protein resides in the golgi apparatus membrane. Functionally, required for the post-translational delivery of tail-anchored (TA) proteins to the endoplasmic reticulum. Together with GET2, acts as a membrane receptor for soluble GET3, which recognizes and selectively binds the transmembrane domain of TA proteins in the cytosol. The GET complex cooperates with the HDEL receptor ERD2 to mediate the ATP-dependent retrieval of resident ER proteins that contain a C-terminal H-D-E-L retention signal from the Golgi to the ER. This is Golgi to ER traffic protein 1 from Candida albicans (strain WO-1) (Yeast).